Here is a 329-residue protein sequence, read N- to C-terminus: Porphobilinogen deaminase (329 aa).

S-(dipyrrolylmethanemethyl)cysteine is present on cysteine 250.

This sequence belongs to the HMBS family. In terms of assembly, monomer. Dipyrromethane serves as cofactor.

It catalyses the reaction 4 porphobilinogen + H2O = hydroxymethylbilane + 4 NH4(+). Its pathway is porphyrin-containing compound metabolism; protoporphyrin-IX biosynthesis; coproporphyrinogen-III from 5-aminolevulinate: step 2/4. Functionally, tetrapolymerization of the monopyrrole PBG into the hydroxymethylbilane pre-uroporphyrinogen in several discrete steps. This Burkholderia mallei (strain NCTC 10247) protein is Porphobilinogen deaminase.